A 103-amino-acid polypeptide reads, in one-letter code: Cell division protein FtsB (103 aa).

At 1 to 3 (MGK) the chain is on the cytoplasmic side. Residues 4-21 (LTLLLLAILVWLQYSLWF) form a helical membrane-spanning segment. The Periplasmic portion of the chain corresponds to 22–103 (GKNGIHDYTR…RAQSAGQNNR (82 aa)). A coiled-coil region spans residues 31–71 (RVNDDVAAQQATNAKLKARNDQLFAEIDDLNGGQEALEERA).

This sequence belongs to the FtsB family. As to quaternary structure, part of a complex composed of FtsB, FtsL and FtsQ.

It localises to the cell inner membrane. Its function is as follows. Essential cell division protein. May link together the upstream cell division proteins, which are predominantly cytoplasmic, with the downstream cell division proteins, which are predominantly periplasmic. This chain is Cell division protein FtsB, found in Shigella boydii serotype 18 (strain CDC 3083-94 / BS512).